The chain runs to 225 residues: Endonuclease V (225 aa).

Positions 43 and 110 each coordinate Mg(2+).

This sequence belongs to the endonuclease V family. Mg(2+) is required as a cofactor.

The protein localises to the cytoplasm. The enzyme catalyses Endonucleolytic cleavage at apurinic or apyrimidinic sites to products with a 5'-phosphate.. Its function is as follows. DNA repair enzyme involved in the repair of deaminated bases. Selectively cleaves double-stranded DNA at the second phosphodiester bond 3' to a deoxyinosine leaving behind the intact lesion on the nicked DNA. In Thermotoga neapolitana (strain ATCC 49049 / DSM 4359 / NBRC 107923 / NS-E), this protein is Endonuclease V.